We begin with the raw amino-acid sequence, 42 residues long: Photosystem I reaction center subunit IX (42 aa).

The helical transmembrane segment at 7–27 (YLSVAPVLSTLWFVSLAGLLI) threads the bilayer.

The protein belongs to the PsaJ family.

The protein localises to the plastid. The protein resides in the chloroplast thylakoid membrane. Functionally, may help in the organization of the PsaE and PsaF subunits. In Capsella bursa-pastoris (Shepherd's purse), this protein is Photosystem I reaction center subunit IX.